The chain runs to 303 residues: Sterol-4-alpha-carboxylate 3-dehydrogenase ERG26, decarboxylating (303 aa).

NADP(+) is bound by residues 8–9 (SL) and 30–32 (TAS). Ser-71 provides a ligand contact to substrate. The interval 77-96 (PTQEPTSEENAHRYDENNAP) is disordered. NADP(+)-binding positions include Tyr-102, Lys-106, and 128–131 (IPGI). Residue Tyr-102 coordinates substrate. Lys-106 acts as the Proton donor in catalysis.

The protein belongs to the 3-beta-HSD family. As to quaternary structure, heterotetramer of ERG25, ERG26, ERG27 and ERG28. ERG28 acts as a scaffold to tether ERG27 and other 4,4-demethylation-related enzymes, forming a demethylation enzyme complex, in the endoplasmic reticulum.

The protein resides in the endoplasmic reticulum membrane. The protein operates within steroid metabolism; ergosterol biosynthesis. Functionally, sterol-4-alpha-carboxylate 3-dehydrogenase; part of the third module of ergosterol biosynthesis pathway that includes the late steps of the pathway. ERG26 is a catalytic component of the C-4 demethylation complex that catalyzes the conversion of 4,4-dimethylfecosterol into fecosterol via 4-methylfecosterol. The third module or late pathway involves the ergosterol synthesis itself through consecutive reactions that mainly occur in the endoplasmic reticulum (ER) membrane. Firstly, the squalene synthase ERG9 catalyzes the condensation of 2 farnesyl pyrophosphate moieties to form squalene, which is the precursor of all steroids. Squalene synthase is crucial for balancing the incorporation of farnesyl diphosphate (FPP) into sterol and nonsterol isoprene synthesis. Secondly, squalene is converted into lanosterol by the consecutive action of the squalene epoxidase ERG1 and the lanosterol synthase ERG7. Then, the delta(24)-sterol C-methyltransferase ERG6 methylates lanosterol at C-24 to produce eburicol. Eburicol is the substrate of the sterol 14-alpha demethylase encoded by CYP51A, CYP51B and CYP51C, to yield 4,4,24-trimethyl ergosta-8,14,24(28)-trienol. CYP51B encodes the enzyme primarily responsible for sterol 14-alpha-demethylation, and plays an essential role in ascospore formation. CYP51A encodes an additional sterol 14-alpha-demethylase, induced on ergosterol depletion and responsible for the intrinsic variation in azole sensitivity. The third CYP51 isoform, CYP51C, does not encode a sterol 14-alpha-demethylase, but is required for full virulence on host wheat ears. The C-14 reductase ERG24 then reduces the C14=C15 double bond which leads to 4,4-dimethylfecosterol. A sequence of further demethylations at C-4, involving the C-4 demethylation complex containing the C-4 methylsterol oxidases ERG25, the sterol-4-alpha-carboxylate 3-dehydrogenase ERG26 and the 3-keto-steroid reductase ERG27, leads to the production of fecosterol via 4-methylfecosterol. ERG28 has a role as a scaffold to help anchor ERG25, ERG26 and ERG27 to the endoplasmic reticulum. The C-8 sterol isomerase ERG2 then catalyzes the reaction which results in unsaturation at C-7 in the B ring of sterols and thus converts fecosterol to episterol. The sterol-C5-desaturases ERG3A and ERG3BB then catalyze the introduction of a C-5 double bond in the B ring to produce 5-dehydroepisterol. The C-22 sterol desaturases ERG5A and ERG5B further convert 5-dehydroepisterol into ergosta-5,7,22,24(28)-tetraen-3beta-ol by forming the C-22(23) double bond in the sterol side chain. Finally, ergosta-5,7,22,24(28)-tetraen-3beta-ol is substrate of the C-24(28) sterol reductase ERG4 to produce ergosterol. The polypeptide is Sterol-4-alpha-carboxylate 3-dehydrogenase ERG26, decarboxylating (Gibberella zeae (strain ATCC MYA-4620 / CBS 123657 / FGSC 9075 / NRRL 31084 / PH-1) (Wheat head blight fungus)).